A 422-amino-acid polypeptide reads, in one-letter code: Protein FAM53B (422 aa).

A phosphoserine mark is found at Ser-119, Ser-168, Ser-170, Ser-180, Ser-213, and Ser-269. 2 disordered regions span residues 193 to 225 (GQPC…GRLD) and 243 to 269 (CPPS…RSRS). The segment covering 244–269 (PPSANSTPASTPELARRSSGLARSRS) has biased composition (low complexity). Positions 282–285 (KRRR) match the Nuclear localization signal motif. A phosphoserine mark is found at Ser-335 and Ser-344.

The protein belongs to the FAM53 family. In terms of assembly, interacts with CTNNB1.

The protein localises to the nucleus. In terms of biological role, acts as a regulator of Wnt signaling pathway by regulating beta-catenin (CTNNB1) nuclear localization. In Mus musculus (Mouse), this protein is Protein FAM53B.